The chain runs to 44 residues: MKRTFQPKNLIRKRRHGFRSRMATRAGRKILNRRRSLGCNKLCA.

Belongs to the bacterial ribosomal protein bL34 family.

This is Large ribosomal subunit protein bL34 from Wolbachia pipientis wMel.